A 187-amino-acid chain; its full sequence is Adenylate kinase (187 aa).

Position 10 to 15 (10 to 15) interacts with ATP; sequence GSGKGT. Residues 30-59 are NMP; it reads STGDLLRAEVAAGSPLGLKAKEVMARGDLV. AMP is bound by residues Thr31, Arg36, 57–59, 85–88, and Gln92; these read DLV and GYPR. Residues 126 to 136 are LID; the sequence is GRAKAEGREDD. Arg127 is a binding site for ATP. AMP-binding residues include Arg133 and Arg144. Gly172 provides a ligand contact to ATP.

This sequence belongs to the adenylate kinase family. Monomer.

Its subcellular location is the cytoplasm. It carries out the reaction AMP + ATP = 2 ADP. It functions in the pathway purine metabolism; AMP biosynthesis via salvage pathway; AMP from ADP: step 1/1. Its function is as follows. Catalyzes the reversible transfer of the terminal phosphate group between ATP and AMP. Plays an important role in cellular energy homeostasis and in adenine nucleotide metabolism. The sequence is that of Adenylate kinase from Xanthomonas axonopodis pv. citri (strain 306).